The following is a 277-amino-acid chain: 4-hydroxy-tetrahydrodipicolinate reductase (277 aa).

Residue Gly-9–Met-14 coordinates NAD(+). Lys-37 lines the NADP(+) pocket. Residue Gly-75–Ser-77 participates in NAD(+) binding. His-132 acts as the Proton donor/acceptor in catalysis. Lys-136 acts as the Proton donor in catalysis. Gly-142 to Thr-143 is a (S)-2,3,4,5-tetrahydrodipicolinate binding site. 2 disordered regions span residues Ala-154–Gln-173 and Glu-247–Ala-277. The span at Ala-250–Gly-265 shows a compositional bias: low complexity.

The protein belongs to the DapB family.

The protein localises to the cytoplasm. It carries out the reaction (S)-2,3,4,5-tetrahydrodipicolinate + NAD(+) + H2O = (2S,4S)-4-hydroxy-2,3,4,5-tetrahydrodipicolinate + NADH + H(+). The enzyme catalyses (S)-2,3,4,5-tetrahydrodipicolinate + NADP(+) + H2O = (2S,4S)-4-hydroxy-2,3,4,5-tetrahydrodipicolinate + NADPH + H(+). It functions in the pathway amino-acid biosynthesis; L-lysine biosynthesis via DAP pathway; (S)-tetrahydrodipicolinate from L-aspartate: step 4/4. Catalyzes the conversion of 4-hydroxy-tetrahydrodipicolinate (HTPA) to tetrahydrodipicolinate. The chain is 4-hydroxy-tetrahydrodipicolinate reductase from Clavibacter michiganensis subsp. michiganensis (strain NCPPB 382).